A 706-amino-acid polypeptide reads, in one-letter code: Transcription factor 12 (706 aa).

The interval 25–109 is disordered; sequence AMFSPPVNSG…TPFMNSNLIG (85 aa). Polar residues-rich tracts occupy residues 30–48 and 56–76; these read PVNS…QFSG and GTTS…SRGF. A phosphoserine mark is found at Ser47, Ser67, and Ser79. A compositionally biased stretch (basic and acidic residues) spans 81–93; the sequence is HYSDHLNDSRLGT. At Ser98 the chain carries Phosphoserine. A Glycyl lysine isopeptide (Lys-Gly) (interchain with G-Cter in SUMO2) cross-link involves residue Lys110. Phosphoserine is present on residues Ser116 and Ser124. The leucine-zipper stretch occupies residues 119-140; it reads LYSRDSGLSGCQSSLLRQDLGL. Disordered stretches follow at residues 140–222 and 249–313; these read LGSP…SMFA and FGGI…ASHT. A compositionally biased stretch (polar residues) spans 144-163; it reads AQLSSSGKPGTPYYSFSATS. A Glycyl lysine isopeptide (Lys-Gly) (interchain with G-Cter in SUMO2) cross-link involves residue Lys181. The Nuclear localization signal signature appears at 181-188; it reads KKVRKVPP. The segment covering 256 to 269 has biased composition (low complexity); sequence STSHMSQSSSYGSL. The segment covering 282–306 has biased composition (polar residues); the sequence is VSPTDINTSLPPMSSFHRGSTSSSP. Phosphothreonine is present on Thr313. Residue Ser333 is modified to Phosphoserine. Disordered stretches follow at residues 349–392 and 520–604; these read PDHT…YENS and HKTP…ERRM. The segment covering 352 to 363 has biased composition (low complexity); it reads TSSSFPSNPSTP. 2 stretches are compositionally biased toward polar residues: residues 364-376 and 383-392; these read VGSP…TSQW and APSSPSYENS. Phosphoserine is present on Ser392. Composition is skewed to basic and acidic residues over residues 542 to 554 and 560 to 575; these read IKTE…ENLH and DDMK…DIKV. Lys543 is covalently cross-linked (Glycyl lysine isopeptide (Lys-Gly) (interchain with G-Cter in SUMO2)). Ser564 is subject to Phosphoserine. Lys574 participates in a covalent cross-link: Glycyl lysine isopeptide (Lys-Gly) (interchain with G-Cter in SUMO2). Phosphothreonine is present on Thr581. A phosphoserine mark is found at Ser582 and Ser583. Residues 592 to 604 are compositionally biased toward basic and acidic residues; the sequence is PEQKIEREKERRM. The region spanning 601-654 is the bHLH domain; sequence ERRMANNARERLRVRDINEAFKELGRMCQLHLKSEKPQTKLLILHQAVAVILSL. Glycyl lysine isopeptide (Lys-Gly) (interchain with G-Cter in SUMO2) cross-links involve residues Lys633 and Lys677. The segment at 656–679 is class A specific domain; the sequence is QQVRERNLNPKAACLKRREEEKVS. The disordered stretch occupies residues 674 to 706; the sequence is EEEKVSAASAEPPNTLPGAHPGLSESTNPMGHL. Residues 697–706 are compositionally biased toward polar residues; that stretch reads SESTNPMGHL.

In terms of assembly, efficient DNA binding requires dimerization with another bHLH protein. Forms homo- or heterooligomers with myogenin, E12 and ITF2 proteins and RUNX1T1. Interacts with PTF1A. Interacts with NEUROD2. Interacts with BHLHA9. In terms of tissue distribution, widely expressed.

It localises to the nucleus. In terms of biological role, transcriptional regulator. Involved in the initiation of neuronal differentiation. Activates transcription by binding to the E box (5'-CANNTG-3'). May be involved in the functional network that regulates the development of the GnRH axis. The chain is Transcription factor 12 (Tcf12) from Mus musculus (Mouse).